A 431-amino-acid polypeptide reads, in one-letter code: MKALLLSLLLLLPVVALAQAPTIEISGANFRPLPVAVPAPLTQNDGAKALVAPFDSAFSFDLTASGILQVLDRKGFTADAKEGMAAASINFSRWADVGAEALVKVSLAQDGGVLRGELRLFNVGTGREDLKVSKDAPADNASLLAHRLADALYRHFTREPSPFLSRITYVRKAGTNRDVYVADWDGGNARALTKGGINILPALSQDGSQVAFTTYRKNRPDIYVQSPGGEAKAVISGGQMATGAAFSPDGKRIAYSLAEGESAQVYVANADGSGARALTDTPYGLNTSPTWSPDGKRIAFVSNRGGSPQVYIMNADGTGVRRLTFQGNYNQTPDWSPRGDLIVFTARDERNAFDLFTVSVETGKVTRLTQDQGSNEEPAFSPNGRLIVFTSTRNGGSQLYVMTADGNNQLPLRTEKGTYQTPDWSPLPQAQ.

Positions 1–18 (MKALLLSLLLLLPVVALA) are cleaved as a signal peptide. A disordered region spans residues 410–431 (LPLRTEKGTYQTPDWSPLPQAQ).

This sequence belongs to the TolB family. The Tol-Pal system is composed of five core proteins: the inner membrane proteins TolA, TolQ and TolR, the periplasmic protein TolB and the outer membrane protein Pal. They form a network linking the inner and outer membranes and the peptidoglycan layer.

The protein localises to the periplasm. Part of the Tol-Pal system, which plays a role in outer membrane invagination during cell division and is important for maintaining outer membrane integrity. The polypeptide is Tol-Pal system protein TolB (Myxococcus xanthus).